Consider the following 99-residue polypeptide: Aspartyl/glutamyl-tRNA(Asn/Gln) amidotransferase subunit C (99 aa).

Belongs to the GatC family. Heterotrimer of A, B and C subunits.

It catalyses the reaction L-glutamyl-tRNA(Gln) + L-glutamine + ATP + H2O = L-glutaminyl-tRNA(Gln) + L-glutamate + ADP + phosphate + H(+). The catalysed reaction is L-aspartyl-tRNA(Asn) + L-glutamine + ATP + H2O = L-asparaginyl-tRNA(Asn) + L-glutamate + ADP + phosphate + 2 H(+). Functionally, allows the formation of correctly charged Asn-tRNA(Asn) or Gln-tRNA(Gln) through the transamidation of misacylated Asp-tRNA(Asn) or Glu-tRNA(Gln) in organisms which lack either or both of asparaginyl-tRNA or glutaminyl-tRNA synthetases. The reaction takes place in the presence of glutamine and ATP through an activated phospho-Asp-tRNA(Asn) or phospho-Glu-tRNA(Gln). This is Aspartyl/glutamyl-tRNA(Asn/Gln) amidotransferase subunit C from Kineococcus radiotolerans (strain ATCC BAA-149 / DSM 14245 / SRS30216).